The following is a 1438-amino-acid chain: DNA polymerase III PolC-type (1438 aa).

The Exonuclease domain occupies 422 to 578 (YVVFDVETTG…YDTEATAYIF (157 aa)).

It belongs to the DNA polymerase type-C family. PolC subfamily.

It is found in the cytoplasm. It carries out the reaction DNA(n) + a 2'-deoxyribonucleoside 5'-triphosphate = DNA(n+1) + diphosphate. Its function is as follows. Required for replicative DNA synthesis. This DNA polymerase also exhibits 3' to 5' exonuclease activity. This chain is DNA polymerase III PolC-type, found in Staphylococcus epidermidis (strain ATCC 35984 / DSM 28319 / BCRC 17069 / CCUG 31568 / BM 3577 / RP62A).